A 734-amino-acid polypeptide reads, in one-letter code: Photosystem I P700 chlorophyll a apoprotein A2 (734 aa).

A run of 8 helical transmembrane segments spans residues 46–69, 135–158, 175–199, 273–291, 330–353, 369–395, 417–439, and 517–535; these read IFASHFGQLAIIFLWTSGNLFHVA, LYTGSLFLLGLAAVALVAGWLHLQ, LNHHLSGLFGVSSLAWTGHLIHVAI, IAHHHLAIAVLFIVAGHMY, LHFQLGLALACLGVITSLVAQHIY, AALYTHHQYIAGFIMTGAFAHGAIFFI, AIISHLSWASLFLGFHTLGLYVH, and FLVHHAIALGLHTTTLILV. 2 residues coordinate [4Fe-4S] cluster: C559 and C568. A run of 2 helical transmembrane segments spans residues 575–596 and 643–665; these read AFYLAVFWMLNTIGWVTFYWHW and LSVWAWMFLFGHLVWATGFMFLI. Chlorophyll a is bound by residues H654, M662, and Y670. Phylloquinone is bound at residue W671. A helical transmembrane segment spans residues 707–727; that stretch reads LVGLAHFSVGYIFTYAAFLIA.

Belongs to the PsaA/PsaB family. In terms of assembly, the PsaA/B heterodimer binds the P700 chlorophyll special pair and subsequent electron acceptors. PSI consists of a core antenna complex that captures photons, and an electron transfer chain that converts photonic excitation into a charge separation. The eukaryotic PSI reaction center is composed of at least 11 subunits. P700 is a chlorophyll a/chlorophyll a' dimer, A0 is one or more chlorophyll a, A1 is one or both phylloquinones and FX is a shared 4Fe-4S iron-sulfur center. serves as cofactor.

The protein resides in the plastid. Its subcellular location is the chloroplast thylakoid membrane. It carries out the reaction reduced [plastocyanin] + hnu + oxidized [2Fe-2S]-[ferredoxin] = oxidized [plastocyanin] + reduced [2Fe-2S]-[ferredoxin]. In terms of biological role, psaA and PsaB bind P700, the primary electron donor of photosystem I (PSI), as well as the electron acceptors A0, A1 and FX. PSI is a plastocyanin-ferredoxin oxidoreductase, converting photonic excitation into a charge separation, which transfers an electron from the donor P700 chlorophyll pair to the spectroscopically characterized acceptors A0, A1, FX, FA and FB in turn. Oxidized P700 is reduced on the lumenal side of the thylakoid membrane by plastocyanin. In Staurastrum punctulatum (Green alga), this protein is Photosystem I P700 chlorophyll a apoprotein A2.